The primary structure comprises 569 residues: MALLAAATLNPTTHLSLRSRAGRNSENLWLRSTASSQKSKGRFCNLTIRAGTPSKPAEPIGPVFTKLKPWQIPKRDWFDKDFLFGASTSAYQIEGAWNEDGKGPSTWDHFCHTYPERISDMTNGDVAANSYHLYEEDVKALKDMGMKVYRFSISWSRILPDGTGKVNQAGIDYYNKLINSLIDNDIVPYVTIWHWDTPQALEDKYGGFLNRQIVDDYKQFAEVCFKNFGDRVKNWFTFNEPHTYCCFSYGEGIHAPGRCSPGMDCAVPEGDSLREPYTAGHHILLAHAEAVQLFKARYNMHGDSKIGMAFDVMGYEPYQDSFLDDQARERSIDYNMGWFLEPVVRGDYPFSMRSLIGDRLPMFTKEEQEKLASSCDIMGLNYYTSRFSKHVDMSPDFTPTLNTDDAYASSETTGSDGNDIGPITGTYWIYMYPKGLTDLLLIMKEKYGNPPVFITENGIADVEGDESMPDPLDDWKRLDYLQRHISAVKDAIDQGADVRGHFTWGLIDNFEWSLGYSSRFGLVYIDKNDGNKRKLKKSAKWFSKFNSVPKPLLKTTNNNATMTAASVSV.

The transit peptide at 1-50 (MALLAAATLNPTTHLSLRSRAGRNSENLWLRSTASSQKSKGRFCNLTIRA) directs the protein to the chloroplast. A beta-D-glucoside is bound by residues Q92, H194, and 239-240 (NE). E240 serves as the catalytic Proton donor. C259 and C265 form a disulfide bridge. Residues Y383, E456, W504, 511-512 (EW), and F520 each bind a beta-D-glucoside. E456 acts as the Nucleophile in catalysis.

The protein belongs to the glycosyl hydrolase 1 family. Homo- and heterohexamers. Expressed in young seedlings early after germination.

It is found in the plastid. The protein localises to the chloroplast. The enzyme catalyses Hydrolysis of terminal, non-reducing beta-D-glucosyl residues with release of beta-D-glucose.. It carries out the reaction DIMBOA beta-D-glucoside + H2O = DIMBOA + D-glucose. The catalysed reaction is DIBOA beta-D-glucoside + H2O = DIBOA + D-glucose. Functionally, acts in defense of young plant parts against pests via the production of hydroxamic acids from hydroxamic acid glucosides. Enzymatic activity is highly correlated with plant growth. The preferred substrate is DIMBOA-beta-D-glucoside. This chain is 4-hydroxy-7-methoxy-3-oxo-3,4-dihydro-2H-1,4-benzoxazin-2-yl glucoside beta-D-glucosidase 1b, chloroplastic (GLU1B), found in Triticum aestivum (Wheat).